The chain runs to 96 residues: Co-chaperonin GroES (96 aa).

Belongs to the GroES chaperonin family. Heptamer of 7 subunits arranged in a ring. Interacts with the chaperonin GroEL.

Its subcellular location is the cytoplasm. Together with the chaperonin GroEL, plays an essential role in assisting protein folding. The GroEL-GroES system forms a nano-cage that allows encapsulation of the non-native substrate proteins and provides a physical environment optimized to promote and accelerate protein folding. GroES binds to the apical surface of the GroEL ring, thereby capping the opening of the GroEL channel. The protein is Co-chaperonin GroES of Paraburkholderia phymatum (strain DSM 17167 / CIP 108236 / LMG 21445 / STM815) (Burkholderia phymatum).